Reading from the N-terminus, the 355-residue chain is N-acetyl-gamma-glutamyl-phosphate reductase (355 aa).

The active site involves Cys152.

The protein belongs to the NAGSA dehydrogenase family. Type 1 subfamily.

It localises to the cytoplasm. The catalysed reaction is N-acetyl-L-glutamate 5-semialdehyde + phosphate + NADP(+) = N-acetyl-L-glutamyl 5-phosphate + NADPH + H(+). It functions in the pathway amino-acid biosynthesis; L-arginine biosynthesis; N(2)-acetyl-L-ornithine from L-glutamate: step 3/4. Its function is as follows. Catalyzes the NADPH-dependent reduction of N-acetyl-5-glutamyl phosphate to yield N-acetyl-L-glutamate 5-semialdehyde. This chain is N-acetyl-gamma-glutamyl-phosphate reductase, found in Psychrobacter arcticus (strain DSM 17307 / VKM B-2377 / 273-4).